The primary structure comprises 1620 residues: NAD-specific glutamate dehydrogenase (1620 aa).

Residue Lys851 is part of the active site.

The protein belongs to the Glu/Leu/Phe/Val dehydrogenases family. In terms of assembly, homotetramer. Post-translationally, contains disulfide bonds (interchain).

It catalyses the reaction L-glutamate + NAD(+) + H2O = 2-oxoglutarate + NH4(+) + NADH + H(+). With respect to regulation, activity subject to allosteric control by arginine and citrate, which function as positive and negative effectors, respectively. In terms of biological role, involved in arginine catabolism by converting L-glutamate, into 2-oxoglutarate, which is then channeled into the tricarboxylic acid cycle. Can also utilize other amino acids of the glutamate family. The chain is NAD-specific glutamate dehydrogenase (gdhB) from Pseudomonas aeruginosa (strain ATCC 15692 / DSM 22644 / CIP 104116 / JCM 14847 / LMG 12228 / 1C / PRS 101 / PAO1).